A 422-amino-acid chain; its full sequence is Serine protease HTRA2, mitochondrial (422 aa).

The N-terminal 17 residues, 1–17, are a transit peptide targeting the mitochondrion; the sequence is MALRGCHRLEVIFKRCI. Residues 18–74 constitute a propeptide that is removed on maturation; that stretch reads ASPVLHSQAGNRRSSQLAIKGVDPNSNGNSGQYQQNGEHKEKGWRRLVRFFVPFSLG. Positions 33–55 are disordered; the sequence is QLAIKGVDPNSNGNSGQYQQNGE. The segment covering 42–53 has biased composition (low complexity); the sequence is NSNGNSGQYQQN. A helical transmembrane segment spans residues 64–82; sequence LVRFFVPFSLGAAVSAAII. 2 consecutive short sequence motifs (IAP-binding) follow at residues 75 to 78 and 94 to 97; these read AAVS and SKMT. A serine protease region spans residues 139–302; it reads SNGSGFIIEQ…IPIDYVKVFL (164 aa). Catalysis depends on charge relay system residues His-157, Asp-189, and Ser-266. One can recognise a PDZ domain in the interval 325–410; that stretch reads MGITMLTLTP…TLDIVILRGV (86 aa).

Belongs to the peptidase S1C family. Interacts with th/DIAP1 (via BIR 2 domain).

The protein localises to the mitochondrion intermembrane space. It localises to the mitochondrion membrane. It catalyses the reaction Cleavage of non-polar aliphatic amino-acids at the P1 position, with a preference for Val, Ile and Met. At the P2 and P3 positions, Arg is selected most strongly with a secondary preference for other hydrophilic residues.. In terms of biological role, serine protease that shows proteolytic activity against a non-specific substrate beta-casein. Promotes or induces cell death either by direct binding to and inhibition of BIRC proteins (also called inhibitor of apoptosis proteins, IAPs), leading to an increase in caspase activity, or by a BIRC inhibition-independent, caspase-independent and serine protease activity-dependent mechanism. Can antagonize antiapoptotic activity of th/Diap1 by directly inducing the degradation of th/Diap1. This chain is Serine protease HTRA2, mitochondrial, found in Drosophila simulans (Fruit fly).